The primary structure comprises 226 residues: uncharacterized protein (226 aa).

This sequence belongs to the HisA/HisF family.

This is an uncharacterized protein from Methanocaldococcus jannaschii (strain ATCC 43067 / DSM 2661 / JAL-1 / JCM 10045 / NBRC 100440) (Methanococcus jannaschii).